We begin with the raw amino-acid sequence, 455 residues long: Probable xyloglucan galactosyltransferase GT17 (455 aa).

At 1–34 the chain is on the cytoplasmic side; that stretch reads MTFNKRQVKINHWPEKNDKEKQKYSKNRETVKLT. The chain crosses the membrane as a helical; Signal-anchor for type II membrane protein span at residues 35–55; sequence LLTLLLLCSICFLFLTLNFPF. At 56–455 the chain is on the lumenal side; the sequence is TIEFTASIPR…QARDNVVVSL (400 aa). N-linked (GlcNAc...) asparagine glycosylation is found at Asn70, Asn169, Asn230, Asn390, and Asn426.

Belongs to the glycosyltransferase 47 family. In terms of tissue distribution, expressed in roots and hypocotyls.

It is found in the golgi apparatus membrane. In terms of biological role, functions in xyloglucan synthesis by adding side chains to the xylosylated glucan backbone. Involved in the galactosylation of hemicellulose xyloglucan. This Arabidopsis thaliana (Mouse-ear cress) protein is Probable xyloglucan galactosyltransferase GT17.